The chain runs to 524 residues: Methylmalonyl-CoA carboxyltransferase 12S subunit (524 aa).

Positions 13 to 268 (MEGRVEQLAE…NNTEEASFVN (256 aa)) constitute a CoA carboxyltransferase N-terminal domain. The segment at 13 to 506 (MEGRVEQLAE…RRKIASALEM (494 aa)) is carboxyltransferase. Residues 274–506 (SPNTELRDIV…RRKIASALEM (233 aa)) enclose the CoA carboxyltransferase C-terminal domain.

Homohexamer. Transcarboxylase is composed of three subunits: 1.3S, 5S, and 12S. The core of the enzyme is composed of six 12S subunits. On each side of the core there are three pairs of 5S subunits. Each 5S dimer is attached to the core by two 1.3S subunits. Thus the total number of chains is 30 (6 + 12 + 12).

The catalysed reaction is (S)-methylmalonyl-CoA + pyruvate = propanoyl-CoA + oxaloacetate. Functionally, the 12S subunit specifically catalyzes the transfer of the carboxyl group of methylmalonyl CoA to the biotin of the 1.3S subunit forming propanoyl-CoA and carboxylated 1.3S-biotin. In Propionibacterium freudenreichii subsp. shermanii, this protein is Methylmalonyl-CoA carboxyltransferase 12S subunit.